We begin with the raw amino-acid sequence, 193 residues long: Ion-translocating oxidoreductase complex subunit A (193 aa).

The next 6 helical transmembrane spans lie at 5 to 25 (LLLF…FLGL), 47 to 67 (FVMT…LIPL), 72 to 92 (LRTL…EMVV), 102 to 122 (LLGI…VALL), 134 to 154 (ALYG…FAAI), and 171 to 191 (AIAL…SGLV).

It belongs to the NqrDE/RnfAE family. The complex is composed of six subunits: RsxA, RsxB, RsxC, RsxD, RsxE and RsxG.

Its subcellular location is the cell inner membrane. Its function is as follows. Part of a membrane-bound complex that couples electron transfer with translocation of ions across the membrane. Required to maintain the reduced state of SoxR. This Salmonella agona (strain SL483) protein is Ion-translocating oxidoreductase complex subunit A.